The primary structure comprises 688 residues: Lipase (688 aa).

Residues 1–35 form the signal peptide; sequence MKTRQNKYSIRKFSVGASSILIAALLFMGGGSAQA. The disordered stretch occupies residues 31 to 309; it reads GSAQAAEQQQ…KSAKQKQYKN (279 aa). Positions 36-302 are cleaved as a propeptide — removed in mature form; it reads AEQQQDKGTV…KNEDQTNKSA (267 aa). Residues 45-54 are compositionally biased toward polar residues; that stretch reads VENSTTQSIG. Low complexity predominate over residues 68–79; it reads NKNVNEKSNVNS. Basic and acidic residues-rich tracts occupy residues 84 to 95 and 103 to 143; these read ESLHNETPKNED and SQND…KHAS. Over residues 144–172 the composition is skewed to polar residues; that stretch reads ENNQTLHSKAAQSNEDVKTKPSQLDNTAA. Basic and acidic residues predominate over residues 173–183; sequence KQEDSQKENLS. A compositionally biased stretch (polar residues) spans 184–211; that stretch reads KQDTQSSKTTDLLRATAQNQSKDSQSTE. Over residues 240-267 the composition is skewed to basic and acidic residues; sequence SKEEPLKVDKQANPTTDKDKSSKNDKGS. Positions 274-289 are enriched in polar residues; the sequence is LESNAVATTNKQSKQQ. The active-site Nucleophile is Ser418. The active-site Charge relay system is Asp609. Ca(2+) is bound at residue Asp647. His648 (charge relay system) is an active-site residue. Asp650, Asp655, and Asp658 together coordinate Ca(2+).

This sequence belongs to the AB hydrolase superfamily. Lipase family.

Its subcellular location is the secreted. The catalysed reaction is a triacylglycerol + H2O = a diacylglycerol + a fatty acid + H(+). This Staphylococcus epidermidis (strain ATCC 12228 / FDA PCI 1200) protein is Lipase (lip).